The chain runs to 105 residues: Nucleoid-associated protein MXAN_1931 (105 aa).

It belongs to the YbaB/EbfC family. As to quaternary structure, homodimer.

It is found in the cytoplasm. The protein localises to the nucleoid. Its function is as follows. Binds to DNA and alters its conformation. May be involved in regulation of gene expression, nucleoid organization and DNA protection. The chain is Nucleoid-associated protein MXAN_1931 from Myxococcus xanthus (strain DK1622).